We begin with the raw amino-acid sequence, 694 residues long: DNA primase (694 aa).

The CHC2-type zinc-finger motif lies at 41-65 (CPFHDDKSPSFTVSPAKQFYYCFSC). The region spanning 265 to 348 (DQAVVVEGYF…QGQVQLRVLN (84 aa)) is the Toprim domain. Residues E271, D317, and D319 each coordinate Mg(2+).

This sequence belongs to the DnaG primase family. In terms of assembly, monomer. Interacts with DnaB. The cofactor is Zn(2+). It depends on Mg(2+) as a cofactor.

It catalyses the reaction ssDNA + n NTP = ssDNA/pppN(pN)n-1 hybrid + (n-1) diphosphate.. Functionally, RNA polymerase that catalyzes the synthesis of short RNA molecules used as primers for DNA polymerase during DNA replication. This chain is DNA primase, found in Synechococcus elongatus (strain ATCC 33912 / PCC 7942 / FACHB-805) (Anacystis nidulans R2).